The following is a 488-amino-acid chain: N-succinylglutamate 5-semialdehyde dehydrogenase (488 aa).

221–226 (GSSRTG) is an NAD(+) binding site. Residues glutamate 244 and cysteine 278 contribute to the active site.

Belongs to the aldehyde dehydrogenase family. AstD subfamily.

It carries out the reaction N-succinyl-L-glutamate 5-semialdehyde + NAD(+) + H2O = N-succinyl-L-glutamate + NADH + 2 H(+). Its pathway is amino-acid degradation; L-arginine degradation via AST pathway; L-glutamate and succinate from L-arginine: step 4/5. Its function is as follows. Catalyzes the NAD-dependent reduction of succinylglutamate semialdehyde into succinylglutamate. The polypeptide is N-succinylglutamate 5-semialdehyde dehydrogenase (Pseudomonas fluorescens (strain SBW25)).